The sequence spans 274 residues: 2,3,4,5-tetrahydropyridine-2,6-dicarboxylate N-succinyltransferase (274 aa).

2 residues coordinate substrate: Arg106 and Asp143.

The protein belongs to the transferase hexapeptide repeat family. Homotrimer.

Its subcellular location is the cytoplasm. It carries out the reaction (S)-2,3,4,5-tetrahydrodipicolinate + succinyl-CoA + H2O = (S)-2-succinylamino-6-oxoheptanedioate + CoA. Its pathway is amino-acid biosynthesis; L-lysine biosynthesis via DAP pathway; LL-2,6-diaminopimelate from (S)-tetrahydrodipicolinate (succinylase route): step 1/3. The polypeptide is 2,3,4,5-tetrahydropyridine-2,6-dicarboxylate N-succinyltransferase (Rickettsia conorii (strain ATCC VR-613 / Malish 7)).